A 356-amino-acid polypeptide reads, in one-letter code: tRNA-specific 2-thiouridylase MnmA 1 (356 aa).

ATP contacts are provided by residues 8–15 and M34; that span reads GMSGGVDS. Catalysis depends on C103, which acts as the Nucleophile. C103 and C199 are disulfide-bonded. Position 127 (G127) interacts with ATP. The interval 149–151 is interaction with tRNA; that stretch reads KDQ. C199 serves as the catalytic Cysteine persulfide intermediate. Positions 305 to 306 are interaction with tRNA; sequence RY.

The protein belongs to the MnmA/TRMU family.

The protein resides in the cytoplasm. The catalysed reaction is S-sulfanyl-L-cysteinyl-[protein] + uridine(34) in tRNA + AH2 + ATP = 2-thiouridine(34) in tRNA + L-cysteinyl-[protein] + A + AMP + diphosphate + H(+). Catalyzes the 2-thiolation of uridine at the wobble position (U34) of tRNA, leading to the formation of s(2)U34. The chain is tRNA-specific 2-thiouridylase MnmA 1 from Clostridium botulinum (strain Loch Maree / Type A3).